Here is a 79-residue protein sequence, read N- to C-terminus: Acyl carrier protein (79 aa).

The Carrier domain maps to 2-77; that stretch reads SDIEARVKKI…NAVDYATKNQ (76 aa). The residue at position 37 (Ser37) is an O-(pantetheine 4'-phosphoryl)serine.

The protein belongs to the acyl carrier protein (ACP) family. Post-translationally, 4'-phosphopantetheine is transferred from CoA to a specific serine of apo-ACP by AcpS. This modification is essential for activity because fatty acids are bound in thioester linkage to the sulfhydryl of the prosthetic group.

It localises to the cytoplasm. The protein operates within lipid metabolism; fatty acid biosynthesis. Functionally, carrier of the growing fatty acid chain in fatty acid biosynthesis. The sequence is that of Acyl carrier protein from Variovorax paradoxus (strain S110).